A 158-amino-acid chain; its full sequence is Protein FAM177B (158 aa).

Residues 36-48 (EYSTEEEEEEEKE) show a composition bias toward acidic residues. The segment at 36-59 (EYSTEEEEEEEKEEQSTNSTLDPS) is disordered.

The protein belongs to the FAM177 family.

This chain is Protein FAM177B (FAM177B), found in Homo sapiens (Human).